The sequence spans 111 residues: Large ribosomal subunit protein uL22 (111 aa).

It belongs to the universal ribosomal protein uL22 family. In terms of assembly, part of the 50S ribosomal subunit.

Functionally, this protein binds specifically to 23S rRNA; its binding is stimulated by other ribosomal proteins, e.g. L4, L17, and L20. It is important during the early stages of 50S assembly. It makes multiple contacts with different domains of the 23S rRNA in the assembled 50S subunit and ribosome. Its function is as follows. The globular domain of the protein is located near the polypeptide exit tunnel on the outside of the subunit, while an extended beta-hairpin is found that lines the wall of the exit tunnel in the center of the 70S ribosome. This is Large ribosomal subunit protein uL22 from Geotalea uraniireducens (strain Rf4) (Geobacter uraniireducens).